We begin with the raw amino-acid sequence, 895 residues long: Serine/threonine-protein kinase-like protein ACR4 (895 aa).

The N-terminal stretch at 1–29 (MRMFETRAREWILLVKLVLFTSIWQLASA) is a signal peptide. The Extracellular portion of the chain corresponds to 30–434 (LGSMSSIAIS…FWSLQLPIAT (405 aa)). A run of 7 repeats spans residues 38–73 (ISYG…GTPG), 77–112 (FIGL…GVPQ), 130–167 (LCGL…VFDK), 169–202 (LHSL…QVIS), 210–245 (FQKI…EEVT), 262–296 (LLAV…TPAP), and 301–339 (FYDL…AVSP). Residues 38 to 339 (ISYGEGGSVF…PASIPLAVSP (302 aa)) form a 7 X 36 AA repeats region. Asparagine 158 and asparagine 196 each carry an N-linked (GlcNAc...) asparagine glycan. Asparagine 290 carries N-linked (GlcNAc...) asparagine glycosylation. One copy of the TNFR-Cys repeat lies at 346–395 (PCPPGTHELSNQENSPCKFTGSHICLPCSTSCPPGMYQKSVCTERSDQVC). 3 disulfide bridges follow: cysteine 347/cysteine 370, cysteine 373/cysteine 387, and cysteine 377/cysteine 395. Asparagine 398 and asparagine 410 each carry an N-linked (GlcNAc...) asparagine glycan. The chain crosses the membrane as a helical span at residues 435–455 (AEIGFALFLVAVVSITAALYI). Residues 456 to 895 (RYRLRNCRCS…GQSLFLHHNF (440 aa)) are Cytoplasmic-facing. Serine 475 bears the Phosphoserine mark. In terms of domain architecture, Protein kinase spans 512–789 (FKEESIVGKG…KVTTALERAL (278 aa)). Residues 518–526 (VGKGSFSCV) and lysine 540 contribute to the ATP site. Aspartate 641 (proton acceptor) is an active-site residue. The disordered stretch occupies residues 818 to 895 (SWRIGSKRSG…GQSLFLHHNF (78 aa)). Positions 865 to 877 (EGRKQQEALRSLE) are enriched in basic and acidic residues.

This sequence belongs to the protein kinase superfamily. Ser/Thr protein kinase family. In terms of assembly, homodimer. Interacts with PP2A3. Post-translationally, autophosphorylated and phosphorylated by ALE2. As to expression, expressed in seedlings, floral buds, siliques, leaves, shoot apical meristems (SAM), and, to a lower extent, in roots.

The protein localises to the cell membrane. Its subcellular location is the endosome. It is found in the multivesicular body membrane. The enzyme catalyses L-seryl-[protein] + ATP = O-phospho-L-seryl-[protein] + ADP + H(+). It catalyses the reaction L-threonyl-[protein] + ATP = O-phospho-L-threonyl-[protein] + ADP + H(+). Functionally, controls formative cell division in meristems, including root tips and lateral root initiation zones of the pericycle, in response to CLE40 signal. Acts with CLE40p peptide as a ligand-receptor pair in a signal transduction pathway, coordinating movement of the root tip and organization of cell divisions in the root meristem. Required during embryogenesis and development, probably for the differentiation of protoderm and epidermal cells. Involved in the regulation of cellular organization during the development of sepal margins and ovule integument outgrowth and promotes giant cell formation. Can phosphorylate ALE2. This Arabidopsis thaliana (Mouse-ear cress) protein is Serine/threonine-protein kinase-like protein ACR4.